The primary structure comprises 402 residues: MSAEGAEPGPGSGSGPGPGPLCPEHGQALSWFCGSERRPVCAACAGLGGRCRGHRIRRAEERAEELRNKIVDQCERLQLQSAAITKYVADVLPGKNQRAVSMASAARELVIQRLSLVRSLCESEEQRLLEQVHGEEERAHQSILTQRVHWAEALQKLDTIRTGLVGMLTHLDDLQLIQKEQEIFERTEEAEGILDPQESEMLNFNEKCTRSPLLTQLWATAVLGSLSGTEDIRIDERTVSPFLQLSDDRKTLTFSTKKSKACADGPERFDHWPNALAATSFQNGLHAWMVNVQNSCAYKVGVASGHLPRKGSGSDCRLGHNAFSWVFSRYDQEFRFSHNGQHEPLGLLRGPAQLGVVLDLQVQELLFYEPASGTVLCAHHVSFPGPLFPVFAVADQTISIVR.

Residues 1–20 (MSAEGAEPGPGSGSGPGPGP) are disordered. The B box-type zinc-finger motif lies at 17–65 (GPGPLCPEHGQALSWFCGSERRPVCAACAGLGGRCRGHRIRRAEERAEE). In terms of domain architecture, B30.2/SPRY spans 212–402 (PLLTQLWATA…VADQTISIVR (191 aa)).

Interacts with TRPV5 and TRPV6. Interacts with YWHAZ/14-3-3 protein zeta.

Its subcellular location is the cytoplasm. The protein resides in the membrane. In terms of biological role, may regulate epithelial calcium transport by inhibiting TRPV5 activity. In Homo sapiens (Human), this protein is B box and SPRY domain-containing protein (BSPRY).